The primary structure comprises 209 residues: A-type ATP synthase subunit D (209 aa).

It belongs to the V-ATPase D subunit family. As to quaternary structure, has multiple subunits with at least A(3), B(3), C, D, E, F, H, I and proteolipid K(x).

The protein resides in the cell membrane. Functionally, component of the A-type ATP synthase that produces ATP from ADP in the presence of a proton gradient across the membrane. The sequence is that of A-type ATP synthase subunit D from Methanosarcina acetivorans (strain ATCC 35395 / DSM 2834 / JCM 12185 / C2A).